Consider the following 399-residue polypeptide: Phosphoglycerate kinase (399 aa).

Residues 22 to 24 (DFN), R38, 61 to 64 (HLGR), R120, and R153 contribute to the substrate site. Residues K204, E326, and 353-356 (GGDT) each bind ATP.

This sequence belongs to the phosphoglycerate kinase family. In terms of assembly, monomer.

It is found in the cytoplasm. The catalysed reaction is (2R)-3-phosphoglycerate + ATP = (2R)-3-phospho-glyceroyl phosphate + ADP. The protein operates within carbohydrate degradation; glycolysis; pyruvate from D-glyceraldehyde 3-phosphate: step 2/5. The sequence is that of Phosphoglycerate kinase from Geotalea daltonii (strain DSM 22248 / JCM 15807 / FRC-32) (Geobacter daltonii).